The chain runs to 148 residues: Arginine repressor (148 aa).

Belongs to the ArgR family.

The protein resides in the cytoplasm. The protein operates within amino-acid biosynthesis; L-arginine biosynthesis [regulation]. Regulates arginine biosynthesis genes. In Pelodictyon phaeoclathratiforme (strain DSM 5477 / BU-1), this protein is Arginine repressor.